Here is a 239-residue protein sequence, read N- to C-terminus: Heptaprenylglyceryl phosphate synthase (239 aa).

Position 12 (K12) interacts with sn-glycerol 1-phosphate. Residues D14 and T40 each contribute to the Mg(2+) site. Sn-glycerol 1-phosphate is bound by residues 159-164, G189, and 209-210; these read YLEYSG and GN.

This sequence belongs to the GGGP/HepGP synthase family. Group I subfamily. As to quaternary structure, homodimer. It depends on Mg(2+) as a cofactor.

It carries out the reaction sn-glycerol 1-phosphate + all-trans-heptaprenyl diphosphate = 3-heptaprenyl-sn-glycero-1-phosphate + diphosphate. Its pathway is membrane lipid metabolism; glycerophospholipid metabolism. Prenyltransferase that catalyzes in vivo the transfer of the heptaprenyl moiety of heptaprenyl pyrophosphate (HepPP; 35 carbon atoms) to the C3 hydroxyl of sn-glycerol-1-phosphate (G1P), producing heptaprenylglyceryl phosphate (HepGP). This reaction is an ether-bond-formation step in the biosynthesis of archaea-type G1P-based membrane lipids found in Bacillales. To a much lesser extent, is also able to use geranylgeranyl diphosphate (GGPP; C20) as the prenyl donor. The sequence is that of Heptaprenylglyceryl phosphate synthase from Geobacillus kaustophilus (strain HTA426).